Consider the following 513-residue polypeptide: Gluconokinase (513 aa).

ATP-binding positions include K16, T261, G300, and 412-416; that span reads GFARS.

The protein belongs to the FGGY kinase family.

It catalyses the reaction D-gluconate + ATP = 6-phospho-D-gluconate + ADP + H(+). It functions in the pathway carbohydrate acid metabolism; D-gluconate degradation. Its activity is regulated as follows. Catabolite repression by gluconate. The polypeptide is Gluconokinase (gntK) (Bacillus licheniformis).